The primary structure comprises 570 residues: Glutamate--tRNA ligase (570 aa).

Residues 107 to 117 carry the 'HIGH' region motif; that stretch reads PNPDFVLHLGS.

This sequence belongs to the class-I aminoacyl-tRNA synthetase family. Glutamate--tRNA ligase type 2 subfamily.

It localises to the cytoplasm. The enzyme catalyses tRNA(Glu) + L-glutamate + ATP = L-glutamyl-tRNA(Glu) + AMP + diphosphate. Its function is as follows. Catalyzes the attachment of glutamate to tRNA(Glu) in a two-step reaction: glutamate is first activated by ATP to form Glu-AMP and then transferred to the acceptor end of tRNA(Glu). This is Glutamate--tRNA ligase from Pyrobaculum calidifontis (strain DSM 21063 / JCM 11548 / VA1).